A 74-amino-acid chain; its full sequence is Benzylsuccinate synthase beta subunit (74 aa).

In terms of assembly, heterohexamer composed of 2 alpha subunits, 2 beta subunits and 2 gamma subunits.

It catalyses the reaction toluene + fumarate = 2-benzylsuccinate. It functions in the pathway xenobiotic degradation; toluene degradation. Its activity is regulated as follows. Activated by the benzylsuccinate synthase activating enzyme BssD. Rapidly inactivated by oxygen. In terms of biological role, catalyzes the addition of fumarate to the methyl group of toluene, leading to the formation of benzylsuccinate. This chain is Benzylsuccinate synthase beta subunit (bssB), found in Thauera aromatica.